Reading from the N-terminus, the 880-residue chain is Alanine--tRNA ligase (880 aa).

4 residues coordinate Zn(2+): His567, His571, Cys669, and His673.

The protein belongs to the class-II aminoacyl-tRNA synthetase family. The cofactor is Zn(2+).

It localises to the cytoplasm. It carries out the reaction tRNA(Ala) + L-alanine + ATP = L-alanyl-tRNA(Ala) + AMP + diphosphate. Functionally, catalyzes the attachment of alanine to tRNA(Ala) in a two-step reaction: alanine is first activated by ATP to form Ala-AMP and then transferred to the acceptor end of tRNA(Ala). Also edits incorrectly charged Ser-tRNA(Ala) and Gly-tRNA(Ala) via its editing domain. This chain is Alanine--tRNA ligase, found in Bacillus cytotoxicus (strain DSM 22905 / CIP 110041 / 391-98 / NVH 391-98).